The following is a 648-amino-acid chain: Fidgetin-like protein 2 (648 aa).

The tract at residues 1-36 (MHWTPEHAQPLNQWPEQHLDVSSTTPSPAHKLELPP) is disordered. Positions 10–27 (PLNQWPEQHLDVSSTTPS) are enriched in polar residues. ATP-binding positions include alanine 394 and 434 to 439 (GCGKAL).

The protein belongs to the AAA ATPase family. Mg(2+) is required as a cofactor.

It localises to the cytoplasm. Its subcellular location is the cell cortex. The catalysed reaction is ATP + H2O = ADP + phosphate + H(+). Its function is as follows. Microtubule-severing enzyme that negatively regulates cell migration and wound healing. In migrating cells, targets dynamic microtubules (MTs) at the leading edge and severs them, thereby suppressing motility. Microtubule severing releases ARHGEF2 which activates RHOA, which in turn regulates focal ahesion turnover via focal adhesion kinase, as opposed to F-actin polymerization, to suppress cell motility. Negative regulator of axon regeneration that suppresses axonal growth by selectively severing dynamic MTs in the distal axon shaft and growth cone. Contributes to proper cell branching during endothelial and neuronal development. In Rattus norvegicus (Rat), this protein is Fidgetin-like protein 2 (Fignl2).